The following is a 403-amino-acid chain: 26S proteasome regulatory subunit 6B homolog (403 aa).

Methionine 1 is subject to N-acetylmethionine. 191-198 (GPPGTGKT) contacts ATP.

This sequence belongs to the AAA ATPase family.

It is found in the cytoplasm. It localises to the nucleus. The 26S proteasome is involved in the ATP-dependent degradation of ubiquitinated proteins. The regulatory (or ATPase) complex confers ATP dependency and substrate specificity to the 26S complex. The sequence is that of 26S proteasome regulatory subunit 6B homolog (psmC4) from Dictyostelium discoideum (Social amoeba).